The chain runs to 129 residues: Follitropin subunit beta (129 aa).

The N-terminal stretch at Met-1 to Cys-18 is a signal peptide. Cystine bridges form between Cys-21/Cys-69, Cys-35/Cys-84, Cys-38/Cys-122, Cys-46/Cys-100, Cys-50/Cys-102, and Cys-105/Cys-112. 2 N-linked (GlcNAc...) asparagine glycosylation sites follow: Asn-25 and Asn-42.

The protein belongs to the glycoprotein hormones subunit beta family. As to quaternary structure, heterodimer. The active follitropin is a heterodimer composed of an alpha chain/CGA shared with other hormones and a unique beta chain/FSHB shown here.

It is found in the secreted. In terms of biological role, together with the alpha chain CGA constitutes follitropin, the follicle-stimulating hormone, and provides its biological specificity to the hormone heterodimer. Binds FSHR, a G protein-coupled receptor, on target cells to activate downstream signaling pathways. Follitropin is involved in follicle development and spermatogenesis in reproductive organs. The chain is Follitropin subunit beta (FSHB) from Homo sapiens (Human).